Reading from the N-terminus, the 430-residue chain is Ribosomal protein uS12 methylthiotransferase RimO (430 aa).

Residues 2 to 118 form the MTTase N-terminal domain; that stretch reads AKIFTISLGC…IDNVIKRPKH (117 aa). The [4Fe-4S] cluster site is built by C11, C47, C81, C150, C154, and C157. The region spanning 136–368 is the Radical SAM core domain; that stretch reads LTAPHSAYLK…AQSRVIDSIN (233 aa). Positions 369-430 constitute a TRAM domain; that stretch reads RKLKGKTVKV…KGYNRTGKII (62 aa).

The protein belongs to the methylthiotransferase family. RimO subfamily. Requires [4Fe-4S] cluster as cofactor.

The protein resides in the cytoplasm. The catalysed reaction is L-aspartate(89)-[ribosomal protein uS12]-hydrogen + (sulfur carrier)-SH + AH2 + 2 S-adenosyl-L-methionine = 3-methylsulfanyl-L-aspartate(89)-[ribosomal protein uS12]-hydrogen + (sulfur carrier)-H + 5'-deoxyadenosine + L-methionine + A + S-adenosyl-L-homocysteine + 2 H(+). Its function is as follows. Catalyzes the methylthiolation of an aspartic acid residue of ribosomal protein uS12. This Elusimicrobium minutum (strain Pei191) protein is Ribosomal protein uS12 methylthiotransferase RimO.